We begin with the raw amino-acid sequence, 400 residues long: Argininosuccinate synthase (400 aa).

Position 8–16 (8–16 (AYSGGLDTS)) interacts with ATP. 2 residues coordinate L-citrulline: Tyr87 and Ser92. Position 117 (Gly117) interacts with ATP. The L-aspartate site is built by Thr119, Asn123, and Asp124. Asn123 is a binding site for L-citrulline. L-citrulline is bound by residues Arg127, Ser175, Glu259, and Tyr271.

This sequence belongs to the argininosuccinate synthase family. Type 1 subfamily. As to quaternary structure, homotetramer.

The protein resides in the cytoplasm. The enzyme catalyses L-citrulline + L-aspartate + ATP = 2-(N(omega)-L-arginino)succinate + AMP + diphosphate + H(+). It functions in the pathway amino-acid biosynthesis; L-arginine biosynthesis; L-arginine from L-ornithine and carbamoyl phosphate: step 2/3. This Frankia casuarinae (strain DSM 45818 / CECT 9043 / HFP020203 / CcI3) protein is Argininosuccinate synthase.